A 104-amino-acid chain; its full sequence is Zinc-containing ferredoxin-2 (104 aa).

Residues 2-37 (GIDPNYRQNRQVVGEHEGHKIYGPVEPPGKLGIHGT) form an N-terminal extension region. Histidine 17, histidine 20, and histidine 35 together coordinate Zn(2+). 4Fe-4S ferredoxin-type domains lie at 38 to 66 (IVGV…WFDT) and 75 to 104 (KADP…VKPP). [3Fe-4S] cluster-binding residues include cysteine 46 and cysteine 52. Cysteine 56 is a binding site for [4Fe-4S] cluster. Residue aspartate 77 coordinates Zn(2+). [4Fe-4S] cluster contacts are provided by cysteine 84, cysteine 87, and cysteine 90. Position 94 (cysteine 94) interacts with [3Fe-4S] cluster.

The cofactor is [3Fe-4S] cluster. Requires [4Fe-4S] cluster as cofactor. It depends on Zn(2+) as a cofactor.

In terms of biological role, ferredoxins are iron-sulfur proteins that transfer electrons in a wide variety of metabolic reactions. This chain is Zinc-containing ferredoxin-2 (zfx2), found in Sulfurisphaera tokodaii (strain DSM 16993 / JCM 10545 / NBRC 100140 / 7) (Sulfolobus tokodaii).